Reading from the N-terminus, the 219-residue chain is MLRGLRIIAENKIGVLRDLTTIIAEEGGNITFAQTFLIKHGEHEGKALIYFEIEGGDFEKILERVKTFDYIIEIEEEESFERVFGKRVIILGGGALVSQVAIGAISEADRHNLRGERISVDTMPVVGEEEIAEAVKAVSRLHRAEVLVLAGGIMGGKITEEVKKLRKSGIRVISLSMFGSVPDVADVVISDPVMAGTLAVMHISEKAKFDLDRVKGRRI.

In terms of domain architecture, ACT spans 4 to 79 (GLRIIAENKI…YIIEIEEEES (76 aa)).

This is an uncharacterized protein from Archaeoglobus fulgidus (strain ATCC 49558 / DSM 4304 / JCM 9628 / NBRC 100126 / VC-16).